The chain runs to 35 residues: Photosystem II reaction center protein M (35 aa).

Residues 5–25 form a helical membrane-spanning segment; sequence ILAFVATALFILIPTAFLLIL.

The protein belongs to the PsbM family. As to quaternary structure, PSII is composed of 1 copy each of membrane proteins PsbA, PsbB, PsbC, PsbD, PsbE, PsbF, PsbH, PsbI, PsbJ, PsbK, PsbL, PsbM, PsbT, PsbX, PsbY, PsbZ, Psb30/Ycf12, at least 3 peripheral proteins of the oxygen-evolving complex and a large number of cofactors. It forms dimeric complexes.

Its subcellular location is the plastid. The protein localises to the chloroplast thylakoid membrane. Functionally, one of the components of the core complex of photosystem II (PSII). PSII is a light-driven water:plastoquinone oxidoreductase that uses light energy to abstract electrons from H(2)O, generating O(2) and a proton gradient subsequently used for ATP formation. It consists of a core antenna complex that captures photons, and an electron transfer chain that converts photonic excitation into a charge separation. This subunit is found at the monomer-monomer interface. This is Photosystem II reaction center protein M from Adiantum capillus-veneris (Maidenhair fern).